A 41-amino-acid chain; its full sequence is Photosystem I reaction center subunit IX (41 aa).

The helical transmembrane segment at 7 to 27 (YLSSAPILATIWFAITAGILI) threads the bilayer.

The protein belongs to the PsaJ family.

The protein localises to the cellular thylakoid membrane. Functionally, may help in the organization of the PsaE and PsaF subunits. This Synechococcus sp. (strain ATCC 27144 / PCC 6301 / SAUG 1402/1) (Anacystis nidulans) protein is Photosystem I reaction center subunit IX.